The sequence spans 263 residues: PDZ domain-containing protein 9 (263 aa).

Residues 30 to 109 (QTKLTVGSMG…GTILQIKVYR (80 aa)) enclose the PDZ domain.

This is PDZ domain-containing protein 9 (PDZD9) from Bos taurus (Bovine).